A 262-amino-acid polypeptide reads, in one-letter code: tRNA pseudouridine synthase A (262 aa).

The Nucleophile role is filled by aspartate 51. Residue tyrosine 109 coordinates substrate.

The protein belongs to the tRNA pseudouridine synthase TruA family. In terms of assembly, homodimer.

The enzyme catalyses uridine(38/39/40) in tRNA = pseudouridine(38/39/40) in tRNA. Functionally, formation of pseudouridine at positions 38, 39 and 40 in the anticodon stem and loop of transfer RNAs. The chain is tRNA pseudouridine synthase A from Legionella pneumophila (strain Paris).